Here is a 592-residue protein sequence, read N- to C-terminus: Craniofacial development protein 2 (592 aa).

The span at 1-16 (MEEFDSKDISTSKDED) shows a compositional bias: basic and acidic residues. Disordered stretches follow at residues 1 to 225 (MEEF…KGQS) and 499 to 592 (VTNE…DCNN). Acidic residues predominate over residues 25–42 (HEDDINELVKEDEVDGEE). 2 stretches are compositionally biased toward basic and acidic residues: residues 78–108 (SRES…RQEE) and 147–162 (KVEE…EVKL). The segment covering 175–184 (LTQQGRLSGR) has biased composition (polar residues). Basic and acidic residues-rich tracts occupy residues 185 to 207 (TSED…RRAD), 508 to 523 (EEAK…EKPE), 552 to 562 (SVFKQDEKDKP), and 580 to 592 (EKCD…DCNN). The tract at residues 499–578 (VTNEEDATNE…SVPSLPAGSG (80 aa)) is hydrophilic.

Post-translationally, phosphorylated by CK2 (casein kinase II) in vitro. As to expression, expressed in liver and lung with higher expression in brain.

The protein resides in the cytoplasm. It localises to the nucleus. In Bos taurus (Bovine), this protein is Craniofacial development protein 2 (CFDP2).